A 43-amino-acid polypeptide reads, in one-letter code: Cytochrome b559 subunit beta (43 aa).

Residues 18–34 (WLAVHTLAVPSVFFLGA) form a helical membrane-spanning segment. His22 lines the heme pocket.

Belongs to the PsbE/PsbF family. In terms of assembly, heterodimer of an alpha subunit and a beta subunit. PSII is composed of 1 copy each of membrane proteins PsbA, PsbB, PsbC, PsbD, PsbE, PsbF, PsbH, PsbI, PsbJ, PsbK, PsbL, PsbM, PsbT, PsbX, PsbY, PsbZ, Psb30/Ycf12, peripheral proteins PsbO, CyanoQ (PsbQ), PsbU, PsbV and a large number of cofactors. It forms dimeric complexes. Heme b serves as cofactor.

It localises to the cellular thylakoid membrane. This b-type cytochrome is tightly associated with the reaction center of photosystem II (PSII). PSII is a light-driven water:plastoquinone oxidoreductase that uses light energy to abstract electrons from H(2)O, generating O(2) and a proton gradient subsequently used for ATP formation. It consists of a core antenna complex that captures photons, and an electron transfer chain that converts photonic excitation into a charge separation. This chain is Cytochrome b559 subunit beta, found in Picosynechococcus sp. (strain ATCC 27264 / PCC 7002 / PR-6) (Agmenellum quadruplicatum).